We begin with the raw amino-acid sequence, 214 residues long: Ribosomal RNA small subunit methyltransferase G (214 aa).

S-adenosyl-L-methionine-binding positions include glycine 73, leucine 78, 124 to 125 (VE), and arginine 139.

It belongs to the methyltransferase superfamily. RNA methyltransferase RsmG family.

It is found in the cytoplasm. It carries out the reaction guanosine(527) in 16S rRNA + S-adenosyl-L-methionine = N(7)-methylguanosine(527) in 16S rRNA + S-adenosyl-L-homocysteine. Functionally, specifically methylates the N7 position of guanine in position 527 of 16S rRNA. The sequence is that of Ribosomal RNA small subunit methyltransferase G from Aeromonas hydrophila subsp. hydrophila (strain ATCC 7966 / DSM 30187 / BCRC 13018 / CCUG 14551 / JCM 1027 / KCTC 2358 / NCIMB 9240 / NCTC 8049).